The sequence spans 325 residues: Probable 2-ketogluconate reductase (325 aa).

Residues 158 to 159, Thr-211, 238 to 240, and Asp-264 each bind NAD(+); these read RI and ISR. Arg-240 is an active-site residue. Glu-269 is a catalytic residue. His-288 acts as the Proton donor in catalysis. 288–291 provides a ligand contact to NAD(+); it reads HIGS.

This sequence belongs to the D-isomer specific 2-hydroxyacid dehydrogenase family.

The catalysed reaction is D-gluconate + NADP(+) = 2-dehydro-D-gluconate + NADPH + H(+). In Bacillus subtilis (strain 168), this protein is Probable 2-ketogluconate reductase (yvcT).